The primary structure comprises 349 residues: tRNA pseudouridine synthase D (349 aa).

Phenylalanine 27 contributes to the substrate binding site. Catalysis depends on aspartate 80, which acts as the Nucleophile. A substrate-binding site is contributed by asparagine 129. One can recognise a TRUD domain in the interval 155–303; the sequence is GVPNYFGAQR…VEAARRAMLL (149 aa). Residue phenylalanine 329 participates in substrate binding.

This sequence belongs to the pseudouridine synthase TruD family.

The catalysed reaction is uridine(13) in tRNA = pseudouridine(13) in tRNA. Its function is as follows. Responsible for synthesis of pseudouridine from uracil-13 in transfer RNAs. This is tRNA pseudouridine synthase D from Enterobacter sp. (strain 638).